Reading from the N-terminus, the 226-residue chain is PKHD-type hydroxylase Pput_0892 (226 aa).

Residues 78-178 (KVFPPLINCY…RYAAFFWTQS (101 aa)) form the Fe2OG dioxygenase domain. 3 residues coordinate Fe cation: histidine 96, aspartate 98, and histidine 159. Arginine 169 contributes to the 2-oxoglutarate binding site.

Fe(2+) is required as a cofactor. The cofactor is L-ascorbate.

The protein is PKHD-type hydroxylase Pput_0892 of Pseudomonas putida (strain ATCC 700007 / DSM 6899 / JCM 31910 / BCRC 17059 / LMG 24140 / F1).